The following is a 294-amino-acid chain: FAD-dependent monooxygenase SAT1 (294 aa).

Asp-108 provides a ligand contact to FAD.

This sequence belongs to the paxM FAD-dependent monooxygenase family. The cofactor is FAD.

It participates in mycotoxin biosynthesis. Functionally, FAD-dependent monooxygenase; part of the satratoxin SC1 cluster involved in the biosynthesis of satratoxins, trichothecene mycotoxins that are associated with human food poisonings. Satratoxins are suggested to be made by products of multiple gene clusters (SC1, SC2 and SC3) that encode 21 proteins in all, including polyketide synthases, acetyltransferases, and other enzymes expected to modify the trichothecene skeleton. SC1 encodes 10 proteins, SAT1 to SAT10. The largest are SAT8, which encodes a putative polyketide synthase (PKS) with a conventional non-reducing architecture, and SAT10, a putative protein containing four ankyrin repeats and thus may be involved in protein scaffolding. The putative short-chain reductase SAT3 may assist the PKS in some capacity. SAT6 contains a secretory lipase domain and acts probably as a trichothecene esterase. SAT5 encodes a putative acetyltransferase, and so, with SAT6, may affect endogenous protection from toxicity. The probable transcription factor SAT9 may regulate the expression of the SC1 cluster. SC2 encodes proteins SAT11 to SAT16, the largest of which encodes the putative reducing PKS SAT13. SAT11 is a cytochrome P450 monooxygenase, while SAT14 and SAT16 are probable acetyltransferases. The SC2 cluster may be regulated by the transcription factor SAT15. SC3 is a small cluster that encodes 5 proteins, SAT17 to SAT21. SAT21 is a putative MFS-type transporter which may have a role in exporting secondary metabolites. The four other proteins putatively encoded in SC3 include the taurine hydroxylase-like protein SAT17, the O-methyltransferase SAT18, the acetyltransferase SAT19, and the Cys6-type zinc finger SAT20, the latter being probably involved in regulation of SC3 expression. In Stachybotrys chartarum (strain CBS 109288 / IBT 7711) (Toxic black mold), this protein is FAD-dependent monooxygenase SAT1.